A 278-amino-acid polypeptide reads, in one-letter code: Pantothenate synthetase (278 aa).

ATP is bound at residue 27 to 34 (MGYLHEGH). Residue His34 is the Proton donor of the active site. Gln58 contacts (R)-pantoate. Residue Gln58 participates in beta-alanine binding. Position 144–147 (144–147 (GQKD)) interacts with ATP. Gln150 is a (R)-pantoate binding site. ATP is bound by residues Val173 and 181–184 (MSSR).

This sequence belongs to the pantothenate synthetase family. Homodimer.

The protein localises to the cytoplasm. It carries out the reaction (R)-pantoate + beta-alanine + ATP = (R)-pantothenate + AMP + diphosphate + H(+). It participates in cofactor biosynthesis; (R)-pantothenate biosynthesis; (R)-pantothenate from (R)-pantoate and beta-alanine: step 1/1. Catalyzes the condensation of pantoate with beta-alanine in an ATP-dependent reaction via a pantoyl-adenylate intermediate. The polypeptide is Pantothenate synthetase (Roseiflexus castenholzii (strain DSM 13941 / HLO8)).